The primary structure comprises 25 residues: Omega-conotoxin CVIB (25 aa).

Cystine bridges form between Cys-1/Cys-16, Cys-8/Cys-20, and Cys-15/Cys-25. A Cysteine amide modification is found at Cys-25.

It belongs to the conotoxin O1 superfamily. Expressed by the venom duct.

It is found in the secreted. Omega-conotoxins act at presynaptic membranes, they bind and block voltage-gated calcium channels (Cav). This toxin blocks N-, P- and Q-type calcium channels. It shows high activities on Cav2.1/CACNA1A (IC(50)=11 nM) and Cav2.2/CACNA1B (IC(50)=7.7 nM). In addition, it shows a higher potency when Cav2.2/CACNA1B is only expressed with the ancillary subunit CACNB3 (IC(50)=1.6 nM) than on Cav2.2/CACNA1B expressed with the ancillary subunits CACNA2D1 and CACNB3 (IC(50)=12 nM). Both the Cav2.2/CACNA1B block by this toxin and the recovery are voltage-independent. It is noteworthy that ancillary subunits beta do not modulate recovery from this toxin block, since Cav2.2/CACNA1B expressed with either the ancillary subunit CACNB2a (isoform 2a) or with CACNB3 exhibits moderate recovery. The polypeptide is Omega-conotoxin CVIB (Conus catus (Cat cone)).